The following is a 320-amino-acid chain: o-succinylbenzoate synthase (320 aa).

Catalysis depends on Lys-133, which acts as the Proton donor. Mg(2+) is bound by residues Asp-161, Glu-190, and Asp-213. Lys-235 serves as the catalytic Proton acceptor.

Belongs to the mandelate racemase/muconate lactonizing enzyme family. MenC type 1 subfamily. A divalent metal cation serves as cofactor.

The enzyme catalyses (1R,6R)-6-hydroxy-2-succinyl-cyclohexa-2,4-diene-1-carboxylate = 2-succinylbenzoate + H2O. It functions in the pathway quinol/quinone metabolism; 1,4-dihydroxy-2-naphthoate biosynthesis; 1,4-dihydroxy-2-naphthoate from chorismate: step 4/7. It participates in quinol/quinone metabolism; menaquinone biosynthesis. Functionally, converts 2-succinyl-6-hydroxy-2,4-cyclohexadiene-1-carboxylate (SHCHC) to 2-succinylbenzoate (OSB). The polypeptide is o-succinylbenzoate synthase (Escherichia coli (strain SMS-3-5 / SECEC)).